Here is a 215-residue protein sequence, read N- to C-terminus: Protein Syd (215 aa).

This sequence belongs to the Syd family.

Its subcellular location is the cell inner membrane. In terms of biological role, interacts with the SecY protein in vivo. May bind preferentially to an uncomplexed state of SecY, thus functioning either as a chelating agent for excess SecY in the cell or as a regulatory factor that negatively controls the translocase function. This is Protein Syd from Shewanella amazonensis (strain ATCC BAA-1098 / SB2B).